Consider the following 807-residue polypeptide: MTDHFDTLIRWQECHDEQQNALLTRPAISASVEISRTVEQILHAVKEYGDHTLREFSRRFDKTVIENIRISPEEIAAAENSLNNDIKQAMQQAMNNIRVFHEAQKPIKIEVETQPGVYCQQVTRPIDSVGLYIPGGSAPLLSTVLMLGTPAQIAGCHKVVLCSPPPIANEILYAATLCGITEIFQIGGAQAIAAMAFGTESVPKVDKIFGPGNAYVTEAKRQVSQRVDGATIDMPAGPSELLIIADAGANPVFVAADLLSQAEHGPDSQVILVTPDEALAKKVITEIEKQLTRLPRNQIAAKALAHSRIIVTTSLQQCVEISNRYGPEHLIIQTRQPEQLVEKITSAGSVFLGDWSPESAGDYASGTNHVLPTYGYTSTYSSLGLADFLKRMTIQQLTPQGLLNLSQTIETLAQAEQLTAHKNALTLRVAALNIAGQGVNMNNIFDANLLARENIRKLTPYMSARRLGGKGDVWLNANEYPLAPDFQCTEQTLNRYPDCQPASVIRRYAAYAGLQPEQVLACRGADESIELLIRVFCEPGQDVVLFCPPTYGMYSVSAETFGVEQKKITALENWQLDIEAIENNLDRVKLIYICSPNNPTGNAINPDSLRKILELTANRAIVTIDEAYIEFCPENSIASWLKNYPNLVILRTLSKAFALAGLRCGFTLASVDIITLLLKVIAPYPLSTPVADIAAQALTAENIAIMQKRVVEIRENRNDLQQALNKLAIVEKVFPSETNYILVKFYDAETVFKTLWHQGIILRDQRKQPGLEGCLRITIGSRKECERVVEAISALSTVNEQPKEIAN.

The segment at 1–440 (MTDHFDTLIR…ALNIAGQGVN (440 aa)) is histidinol dehydrogenase. Zn(2+) is bound by residues Q261 and H264. Active-site residues include E328 and H329. Zn(2+) contacts are provided by D362 and H421. The segment at 441–807 (MNNIFDANLL…VNEQPKEIAN (367 aa)) is histidinol-phosphate aminotransferase. K655 carries the post-translational modification N6-(pyridoxal phosphate)lysine.

It in the N-terminal section; belongs to the histidinol dehydrogenase family. This sequence in the C-terminal section; belongs to the class-II pyridoxal-phosphate-dependent aminotransferase family. Histidinol-phosphate aminotransferase subfamily. As to quaternary structure, homodimer. The cofactor is Zn(2+). Requires pyridoxal 5'-phosphate as cofactor.

It catalyses the reaction L-histidinol phosphate + 2-oxoglutarate = 3-(imidazol-4-yl)-2-oxopropyl phosphate + L-glutamate. The catalysed reaction is L-histidinol + 2 NAD(+) + H2O = L-histidine + 2 NADH + 3 H(+). It participates in amino-acid biosynthesis; L-histidine biosynthesis; L-histidine from 5-phospho-alpha-D-ribose 1-diphosphate: step 7/9. It functions in the pathway amino-acid biosynthesis; L-histidine biosynthesis; L-histidine from 5-phospho-alpha-D-ribose 1-diphosphate: step 9/9. In terms of biological role, catalyzes the sequential NAD-dependent oxidations of L-histidinol to L-histidinaldehyde and then to L-histidine. In Photorhabdus laumondii subsp. laumondii (strain DSM 15139 / CIP 105565 / TT01) (Photorhabdus luminescens subsp. laumondii), this protein is Putative histidine biosynthesis bifunctional protein HisCD (hisCD).